A 266-amino-acid polypeptide reads, in one-letter code: Nitrate import ATP-binding protein NrtD (266 aa).

One can recognise an ABC transporter domain in the interval Leu3–Tyr234. Residue Gly39–Ser46 coordinates ATP.

Belongs to the ABC transporter superfamily. Nitrate/nitrite/cyanate uptake transporter (NitT) (TC 3.A.1.16) family. The complex is composed of two ATP-binding proteins (NrtC and NrtD), two transmembrane proteins (NrtB) and a solute-binding protein (NrtA).

Its subcellular location is the cell inner membrane. It carries out the reaction nitrate(out) + ATP + H2O = nitrate(in) + ADP + phosphate + H(+). In terms of biological role, part of the ABC transporter complex NrtABCD involved in nitrate uptake. The complex is probably also involved in nitrite transport. Probably responsible for energy coupling to the transport system. The protein is Nitrate import ATP-binding protein NrtD (nrtD) of Synechocystis sp. (strain ATCC 27184 / PCC 6803 / Kazusa).